Reading from the N-terminus, the 313-residue chain is Probable lysophospholipase L2 (313 aa).

It is found in the cell inner membrane. It catalyses the reaction a 1-acyl-sn-glycero-3-phosphocholine + H2O = sn-glycerol 3-phosphocholine + a fatty acid + H(+). The sequence is that of Probable lysophospholipase L2 (pldB) from Haemophilus influenzae (strain ATCC 51907 / DSM 11121 / KW20 / Rd).